The chain runs to 151 residues: Trivalent organoarsenical cleaving enzyme (151 aa).

The region spanning 2 to 118 is the VOC domain; sequence SRVQLALRVP…GGEPWEVYVV (117 aa). A Fe(2+)-binding site is contributed by Gln-5. Position 61 (Asp-61) interacts with roxarsone (III). Residue His-62 coordinates Fe(2+). The roxarsone (III) site is built by Cys-95 and Cys-96. Glu-114 provides a ligand contact to Fe(2+).

Monomer. The cofactor is Fe(2+).

The catalysed reaction is methylarsonous acid + AH2 + O2 = arsenite + methanol + A + H(+). It carries out the reaction roxarsone (III) + AH2 + O2 = 4-hydroxy-3-nitrocyclohexa-2,5-dien-1-one + arsenite + A + H(+). The enzyme catalyses nitarsone (III) + AH2 + O2 = 4-nitrocyclohexa-2,5-dien-1-one + arsenite + A + H(+). It catalyses the reaction 4-aminophenylarsonous acid + AH2 + O2 = 4-aminocyclohexa-2,5-dien-1-one + arsenite + A. In terms of biological role, nonheme iron-dependent dioxygenase that can break carbon-arsenic bonds, playing a role in the detoxification of environmental organoarsenical compounds. Catalyzes the oxygen-dependent demethylation of highly toxic methylarsonous acid (MAs(III)) to arsenite, which can then be exported out of the cell. Can also cleave the C-As bond in several trivalent aromatic arsenicals, including roxarsone (III), nitarsone (III) and (4-aminophenyl)arsonous acid. Organoarsenical degradation by this enzyme is proposed to have a significant impact on the arsenic biogeocycle that maintains a balance between organic and inorganic species. In Thermomonospora curvata (strain ATCC 19995 / DSM 43183 / JCM 3096 / KCTC 9072 / NBRC 15933 / NCIMB 10081 / Henssen B9), this protein is Trivalent organoarsenical cleaving enzyme.